Here is a 208-residue protein sequence, read N- to C-terminus: MIVIKDAHFLTSSNNLSQCPASLTSEMVILGRSNVGKSTFINTLLGKNLAKSSATPGKTRLANFFSTTWEDKENALTTTFNVIDLPGFGYAKVSKSLKKEWEGFLWELLSVRVSIKLFIHLIDARHLDLEIDKNAKENIQALLRPDQAYLSLFTKFDKLNKNEQHRLFLNAPKPFLINTIHFNALSSKYPTLEIVRQTLLKYLLTNPL.

One can recognise an EngB-type G domain in the interval 23–205 (LTSEMVILGR…RQTLLKYLLT (183 aa)). GTP-binding positions include 31 to 38 (GRSNVGKS), 57 to 61 (GKTRL), 84 to 87 (DLPG), 154 to 157 (TKFD), and 182 to 184 (FNA). Mg(2+) is bound by residues Ser38 and Thr59.

The protein belongs to the TRAFAC class TrmE-Era-EngA-EngB-Septin-like GTPase superfamily. EngB GTPase family. Mg(2+) is required as a cofactor.

In terms of biological role, necessary for normal cell division and for the maintenance of normal septation. This Helicobacter pylori (strain J99 / ATCC 700824) (Campylobacter pylori J99) protein is Probable GTP-binding protein EngB.